The following is a 266-amino-acid chain: Undecaprenyl-diphosphatase (266 aa).

8 helical membrane passes run methionine 1 to isoleucine 21, glutamine 39 to phenylalanine 59, tryptophan 87 to isoleucine 107, leucine 111 to alanine 131, valine 144 to threonine 164, alanine 183 to valine 203, alanine 218 to leucine 238, and methionine 246 to leucine 266.

The protein belongs to the UppP family.

It localises to the cell inner membrane. It catalyses the reaction di-trans,octa-cis-undecaprenyl diphosphate + H2O = di-trans,octa-cis-undecaprenyl phosphate + phosphate + H(+). Functionally, catalyzes the dephosphorylation of undecaprenyl diphosphate (UPP). Confers resistance to bacitracin. This Shewanella piezotolerans (strain WP3 / JCM 13877) protein is Undecaprenyl-diphosphatase.